Here is a 206-residue protein sequence, read N- to C-terminus: Uridine kinase (206 aa).

11 to 18 (GGTGSGKS) lines the ATP pocket.

It belongs to the uridine kinase family.

Its subcellular location is the cytoplasm. The enzyme catalyses uridine + ATP = UMP + ADP + H(+). It carries out the reaction cytidine + ATP = CMP + ADP + H(+). The protein operates within pyrimidine metabolism; CTP biosynthesis via salvage pathway; CTP from cytidine: step 1/3. Its pathway is pyrimidine metabolism; UMP biosynthesis via salvage pathway; UMP from uridine: step 1/1. In Clostridium botulinum (strain Okra / Type B1), this protein is Uridine kinase.